The primary structure comprises 117 residues: Large ribosomal subunit protein bL20 (117 aa).

Belongs to the bacterial ribosomal protein bL20 family.

In terms of biological role, binds directly to 23S ribosomal RNA and is necessary for the in vitro assembly process of the 50S ribosomal subunit. It is not involved in the protein synthesizing functions of that subunit. The polypeptide is Large ribosomal subunit protein bL20 (rplT) (Synechocystis sp. (strain ATCC 27184 / PCC 6803 / Kazusa)).